The chain runs to 178 residues: Transcription termination/antitermination protein NusG (178 aa).

Residues 130 to 159 (SVKVKEGPFANFIGTIEEIQLDKRKLKVHV) form the KOW domain.

It belongs to the NusG family.

Functionally, participates in transcription elongation, termination and antitermination. This Halalkalibacterium halodurans (strain ATCC BAA-125 / DSM 18197 / FERM 7344 / JCM 9153 / C-125) (Bacillus halodurans) protein is Transcription termination/antitermination protein NusG.